Here is a 545-residue protein sequence, read N- to C-terminus: MTKYIFITGGVVSSLGKGIAAASLAAILEARGLRVTLIKLDPYINVDPGTMSPFQHGEVFVTNDGAETDLDLGHYERFVKTTMTKRNNFTSGKIYENVIKKERRGDYLGGTVQVIPHITNEIKRCIKLGADAFDVAMVEIGGTVGDIESLPFLEAIRQMRIELGSQRAIFIHLTLVPYIATSGETKTKPTQHSVKELRSIGIQPDVLICRSEKPLSMADRAKIALFTNVEKEAVISLEDANSIYQIPMILHAQHLDEIVVKKLSLEAKQADLSEWQRVVDMQAVQTMTVKIAMVGKYTELNDAYKSINEALLHAGIHTETKVEIIYFDAEMIEKHGALLLESIDAILVPGGFGERGVEGKIKAIQYAREHKVPFLGICLGMQTAVIEFARNVVGLTGANSTEFNKETLYPVLGLISEWMDADGSKQTRDESTDLGGTMRLGGQYCHLAEGTLARKVYGKSQIIERHRHRYEVNNKYVDSLVKHGLIISGRSADNSLVEMIELADHPWFLACQFHPEFTSNPRDSHPLFKEFVFAARIHHQEKDKK.

Positions 1–265 (MTKYIFITGG…DEIVVKKLSL (265 aa)) are amidoligase domain. S13 lines the CTP pocket. S13 serves as a coordination point for UTP. ATP contacts are provided by residues 14 to 19 (SLGKGI) and D71. Residues D71 and E139 each contribute to the Mg(2+) site. CTP is bound by residues 146 to 148 (DIE), 186 to 191 (KTKPTQ), and K222. UTP contacts are provided by residues 186–191 (KTKPTQ) and K222. A Glutamine amidotransferase type-1 domain is found at 290–541 (KIAMVGKYTE…VFAARIHHQE (252 aa)). G351 serves as a coordination point for L-glutamine. C378 (nucleophile; for glutamine hydrolysis) is an active-site residue. Residues 379 to 382 (LGMQ), E402, and R469 contribute to the L-glutamine site. Active-site residues include H514 and E516.

Belongs to the CTP synthase family. Homotetramer.

The enzyme catalyses UTP + L-glutamine + ATP + H2O = CTP + L-glutamate + ADP + phosphate + 2 H(+). It catalyses the reaction L-glutamine + H2O = L-glutamate + NH4(+). The catalysed reaction is UTP + NH4(+) + ATP = CTP + ADP + phosphate + 2 H(+). It functions in the pathway pyrimidine metabolism; CTP biosynthesis via de novo pathway; CTP from UDP: step 2/2. Allosterically activated by GTP, when glutamine is the substrate; GTP has no effect on the reaction when ammonia is the substrate. The allosteric effector GTP functions by stabilizing the protein conformation that binds the tetrahedral intermediate(s) formed during glutamine hydrolysis. Inhibited by the product CTP, via allosteric rather than competitive inhibition. Its function is as follows. Catalyzes the ATP-dependent amination of UTP to CTP with either L-glutamine or ammonia as the source of nitrogen. Regulates intracellular CTP levels through interactions with the four ribonucleotide triphosphates. This Legionella pneumophila (strain Lens) protein is CTP synthase.